Here is a 446-residue protein sequence, read N- to C-terminus: Exodeoxyribonuclease 7 large subunit (446 aa).

This sequence belongs to the XseA family. In terms of assembly, heterooligomer composed of large and small subunits.

The protein resides in the cytoplasm. The catalysed reaction is Exonucleolytic cleavage in either 5'- to 3'- or 3'- to 5'-direction to yield nucleoside 5'-phosphates.. In terms of biological role, bidirectionally degrades single-stranded DNA into large acid-insoluble oligonucleotides, which are then degraded further into small acid-soluble oligonucleotides. This chain is Exodeoxyribonuclease 7 large subunit, found in Streptococcus thermophilus (strain ATCC BAA-250 / LMG 18311).